A 352-amino-acid polypeptide reads, in one-letter code: Heat-inducible transcription repressor HrcA (352 aa).

The protein belongs to the HrcA family.

In terms of biological role, negative regulator of class I heat shock genes (grpE-dnaK-dnaJ and groELS operons). Prevents heat-shock induction of these operons. This Latilactobacillus sakei subsp. sakei (strain 23K) (Lactobacillus sakei subsp. sakei) protein is Heat-inducible transcription repressor HrcA.